A 223-amino-acid chain; its full sequence is Probable glutathione S-transferase (223 aa).

Residues 2–81 (AEVKLLGFWY…YIDETFEGPS (80 aa)) enclose the GST N-terminal domain. Glutathione-binding positions include serine 12, lysine 39, valine 53, and 65–66 (ES). One can recognise a GST C-terminal domain in the interval 86 to 212 (DPYDRALARF…ELLAFFRARF (127 aa)).

The protein belongs to the GST superfamily. HSP26 family. As to expression, root tip-specific expression.

It carries out the reaction RX + glutathione = an S-substituted glutathione + a halide anion + H(+). This Nicotiana tabacum (Common tobacco) protein is Probable glutathione S-transferase.